Consider the following 471-residue polypeptide: Tigger transposable element-derived protein 3 (471 aa).

Residues 3–55 (LSSKKKLHALSLAEKIQVLELLDESKMSQSEVARRFQVSQPQISRICKNKEKL) enclose the HTH psq-type domain. 2 consecutive DNA-binding regions (H-T-H motif) follow at residues 31 to 51 (QSEV…ICKN) and 100 to 130 (PMLL…WKRR). The HTH CENPB-type domain maps to 67-137 (ERKRKRESKY…KRRNNVGFGA (71 aa)). Positions 167 to 360 (FSPEDVFGCA…VPPQLIFSSF (194 aa)) constitute a DDE-1 domain.

This sequence belongs to the tigger transposable element derived protein family.

It localises to the nucleus. This is Tigger transposable element-derived protein 3 (TIGD3) from Homo sapiens (Human).